The following is a 299-amino-acid chain: UDP-N-acetylenolpyruvoylglucosamine reductase (299 aa).

Positions 27-192 (KSGGAADWLF…VGATFRGRPG (166 aa)) constitute an FAD-binding PCMH-type domain. Residue Arg172 is part of the active site. The segment at 206-225 (ASREASQPLRSRTGGSTFKN) is disordered. Polar residues predominate over residues 208–224 (REASQPLRSRTGGSTFK). The active-site Proton donor is the Ser221. Glu291 is an active-site residue.

Belongs to the MurB family. The cofactor is FAD.

Its subcellular location is the cytoplasm. It catalyses the reaction UDP-N-acetyl-alpha-D-muramate + NADP(+) = UDP-N-acetyl-3-O-(1-carboxyvinyl)-alpha-D-glucosamine + NADPH + H(+). It participates in cell wall biogenesis; peptidoglycan biosynthesis. Cell wall formation. The sequence is that of UDP-N-acetylenolpyruvoylglucosamine reductase from Sphingopyxis alaskensis (strain DSM 13593 / LMG 18877 / RB2256) (Sphingomonas alaskensis).